The chain runs to 324 residues: Glucokinase (324 aa).

6 to 11 contacts ATP; that stretch reads IDIGGT.

It belongs to the bacterial glucokinase family.

Its subcellular location is the cytoplasm. The enzyme catalyses D-glucose + ATP = D-glucose 6-phosphate + ADP + H(+). This is Glucokinase from Zymomonas mobilis subsp. mobilis (strain ATCC 31821 / ZM4 / CP4).